Consider the following 167-residue polypeptide: Sporulation membrane protein YtrI (167 aa).

The chain crosses the membrane as a helical span at residues 15-35 (FFAGMMCGAVISWFFFLFTYG).

The protein localises to the cell membrane. In terms of biological role, involved in sporulation. The polypeptide is Sporulation membrane protein YtrI (ytrI) (Bacillus subtilis (strain 168)).